A 235-amino-acid chain; its full sequence is Small ribosomal subunit protein uS2 (235 aa).

This sequence belongs to the universal ribosomal protein uS2 family.

The sequence is that of Small ribosomal subunit protein uS2 from Caldanaerobacter subterraneus subsp. tengcongensis (strain DSM 15242 / JCM 11007 / NBRC 100824 / MB4) (Thermoanaerobacter tengcongensis).